Consider the following 56-residue polypeptide: UPF0291 protein Clos_1191 (56 aa).

This sequence belongs to the UPF0291 family.

It is found in the cytoplasm. In Alkaliphilus oremlandii (strain OhILAs) (Clostridium oremlandii (strain OhILAs)), this protein is UPF0291 protein Clos_1191.